Here is a 657-residue protein sequence, read N- to C-terminus: Glycogen debranching enzyme (657 aa).

D336 functions as the Nucleophile in the catalytic mechanism. Residue E371 is the Proton donor of the active site. The disordered stretch occupies residues 460-479; the sequence is ANGEENRDGTNNNYSNNHGK.

The protein belongs to the glycosyl hydrolase 13 family.

The enzyme catalyses Hydrolysis of (1-&gt;6)-alpha-D-glucosidic linkages to branches with degrees of polymerization of three or four glucose residues in limit dextrin.. Its pathway is glycan degradation; glycogen degradation. Functionally, removes maltotriose and maltotetraose chains that are attached by 1,6-alpha-linkage to the limit dextrin main chain, generating a debranched limit dextrin. The polypeptide is Glycogen debranching enzyme (Escherichia coli O1:K1 / APEC).